Here is a 314-residue protein sequence, read N- to C-terminus: Dihydroorotate dehydrogenase (fumarate) (314 aa).

Substrate is bound by residues Lys46, 70–74 (NSMGL), and Asn130. 46 to 47 (KS) provides a ligand contact to FMN. Asn130 contacts FMN. Active-site nucleophile residues include Ser132 and Cys133. FMN-binding residues include Lys167 and Ile195. Residue 196–197 (NS) participates in substrate binding. FMN is bound by residues Gly224, 252–253 (GG), and 274–275 (GT).

Belongs to the dihydroorotate dehydrogenase family. Type 1 subfamily. As to quaternary structure, homodimer. FMN serves as cofactor.

It localises to the cytoplasm. It catalyses the reaction (S)-dihydroorotate + fumarate = orotate + succinate. The protein operates within pyrimidine metabolism; UMP biosynthesis via de novo pathway. Its function is as follows. Catalyzes the conversion of dihydroorotate to orotate with fumarate as the electron acceptor. The polypeptide is Dihydroorotate dehydrogenase (fumarate) (URA1) (Saccharomyces mikatae (Yeast)).